The primary structure comprises 237 residues: Ribonuclease PH (237 aa).

Phosphate-binding positions include Arg86 and 124–126 (GTR).

It belongs to the RNase PH family. In terms of assembly, homohexameric ring arranged as a trimer of dimers.

The catalysed reaction is tRNA(n+1) + phosphate = tRNA(n) + a ribonucleoside 5'-diphosphate. Its function is as follows. Phosphorolytic 3'-5' exoribonuclease that plays an important role in tRNA 3'-end maturation. Removes nucleotide residues following the 3'-CCA terminus of tRNAs; can also add nucleotides to the ends of RNA molecules by using nucleoside diphosphates as substrates, but this may not be physiologically important. Probably plays a role in initiation of 16S rRNA degradation (leading to ribosome degradation) during starvation. The polypeptide is Ribonuclease PH (Bradyrhizobium sp. (strain ORS 278)).